The following is a 499-amino-acid chain: Phenylalanine--tRNA ligase alpha subunit (499 aa).

Residues T342, 381 to 383 (QID), and F422 each bind L-phenylalanine. E424 is a Mg(2+) binding site. F447 is a binding site for L-phenylalanine.

The protein belongs to the class-II aminoacyl-tRNA synthetase family. Phe-tRNA synthetase alpha subunit type 2 subfamily. As to quaternary structure, tetramer of two alpha and two beta subunits. Mg(2+) serves as cofactor.

It localises to the cytoplasm. It catalyses the reaction tRNA(Phe) + L-phenylalanine + ATP = L-phenylalanyl-tRNA(Phe) + AMP + diphosphate + H(+). The protein is Phenylalanine--tRNA ligase alpha subunit of Pyrococcus horikoshii (strain ATCC 700860 / DSM 12428 / JCM 9974 / NBRC 100139 / OT-3).